We begin with the raw amino-acid sequence, 62 residues long: Temporin-HN1 (62 aa).

Positions 1–22 (MFTLKKSLLLLLFLGTINLSLS) are cleaved as a signal peptide. Residues 23–44 (EQERNAEEERRDDPEEMDAEVE) constitute a propeptide that is removed on maturation. A Leucine amide modification is found at Leu60.

In terms of tissue distribution, expressed by the skin glands.

Its subcellular location is the secreted. In terms of biological role, has antimicrobial activity against some Gram-positive bacteria and fungi but has no activity against a range of Gram-negative bacteria except P.faecalis. Active against the Gram-positive bacteria S.aureus ATCC 25923 (MIC=37.5 uM), S.carnosus KHS (MIC=37.5 uM), B.licheniformis X39 (MIC=19 uM), R.rhodochrous X15 (MIC=4.8 uM), is virtually inactive against E.faecalis 981 (MIC=150 uM) and inactive against E.faecium 091299. Has some antimicrobial activity against the Gram-negative bacterium P.faecalis X29 (MIC=75 uM) and is inactive against E.coli, P.aeruginosa and S.typhi. Has antifungal activity against C.albicans ATCC 2002 (MIC=19 uM) and lower activity against the slime mold 090223 (MIC=75 uM). Has low hemolytic activity against human erythrocytes (LC(50)=75 uM). The sequence is that of Temporin-HN1 from Odorrana hainanensis (Odor frog).